Consider the following 422-residue polypeptide: Dihydroorotase (422 aa).

H59 and H61 together coordinate Zn(2+). Residues 61–63 (HFR) and N93 contribute to the substrate site. Zn(2+)-binding residues include D150, H177, and H230. Position 276 (N276) interacts with substrate. D303 is a binding site for Zn(2+). D303 is an active-site residue. H307 lines the substrate pocket.

It belongs to the metallo-dependent hydrolases superfamily. DHOase family. Class I DHOase subfamily. The cofactor is Zn(2+).

The catalysed reaction is (S)-dihydroorotate + H2O = N-carbamoyl-L-aspartate + H(+). Its pathway is pyrimidine metabolism; UMP biosynthesis via de novo pathway; (S)-dihydroorotate from bicarbonate: step 3/3. Catalyzes the reversible cyclization of carbamoyl aspartate to dihydroorotate. The sequence is that of Dihydroorotase from Streptococcus pyogenes serotype M3 (strain ATCC BAA-595 / MGAS315).